A 440-amino-acid chain; its full sequence is GTPase Der (440 aa).

EngA-type G domains are found at residues 4–168 (PIVA…NPED) and 177–352 (IKVA…NQNA). GTP-binding positions include 10-17 (GRPNVGKS), 57-61 (DTGGI), 120-123 (NKVD), 183-190 (GKPNVGKS), 230-234 (DTAGI), and 295-298 (NKWD). The 85-residue stretch at 353–437 (MRIPTGALNE…PIRFILREKT (85 aa)) folds into the KH-like domain.

It belongs to the TRAFAC class TrmE-Era-EngA-EngB-Septin-like GTPase superfamily. EngA (Der) GTPase family. In terms of assembly, associates with the 50S ribosomal subunit.

Its function is as follows. GTPase that plays an essential role in the late steps of ribosome biogenesis. The polypeptide is GTPase Der (Alkaliphilus oremlandii (strain OhILAs) (Clostridium oremlandii (strain OhILAs))).